A 380-amino-acid polypeptide reads, in one-letter code: Erythronate-4-phosphate dehydrogenase (380 aa).

Positions 45 and 66 each coordinate substrate. NAD(+)-binding positions include 126–127 (QV), Asp-146, Thr-175, 206–208 (ASR), and Asp-232. Arg-208 is a catalytic residue. Glu-237 is an active-site residue. His-254 (proton donor) is an active-site residue. Gly-257 is a binding site for NAD(+). Tyr-258 is a substrate binding site.

Belongs to the D-isomer specific 2-hydroxyacid dehydrogenase family. PdxB subfamily. As to quaternary structure, homodimer.

It is found in the cytoplasm. It carries out the reaction 4-phospho-D-erythronate + NAD(+) = (R)-3-hydroxy-2-oxo-4-phosphooxybutanoate + NADH + H(+). The protein operates within cofactor biosynthesis; pyridoxine 5'-phosphate biosynthesis; pyridoxine 5'-phosphate from D-erythrose 4-phosphate: step 2/5. Its function is as follows. Catalyzes the oxidation of erythronate-4-phosphate to 3-hydroxy-2-oxo-4-phosphonooxybutanoate. The protein is Erythronate-4-phosphate dehydrogenase of Pseudomonas paraeruginosa (strain DSM 24068 / PA7) (Pseudomonas aeruginosa (strain PA7)).